The sequence spans 317 residues: D-alanine--D-alanine ligase (317 aa).

The ATP-grasp domain maps to 103–299 (KHIFHSLNID…FNELVKIIVE (197 aa)). Residue 130–183 (KVDYPYVLKPINEGSSIGVHMIFSHEDYLELKNNSSTIMEKMIIEEYIPGIELH) coordinates ATP. 3 residues coordinate Mg(2+): Asp251, Glu265, and Asn267.

It belongs to the D-alanine--D-alanine ligase family. It depends on Mg(2+) as a cofactor. Requires Mn(2+) as cofactor.

Its subcellular location is the cytoplasm. It catalyses the reaction 2 D-alanine + ATP = D-alanyl-D-alanine + ADP + phosphate + H(+). It functions in the pathway cell wall biogenesis; peptidoglycan biosynthesis. Functionally, cell wall formation. In Wolbachia pipientis subsp. Culex pipiens (strain wPip), this protein is D-alanine--D-alanine ligase.